Here is a 435-residue protein sequence, read N- to C-terminus: Serine hydroxymethyltransferase (435 aa).

(6S)-5,6,7,8-tetrahydrofolate-binding positions include leucine 133 and 137–139; that span reads GHL. Position 242 is an N6-(pyridoxal phosphate)lysine (lysine 242).

It belongs to the SHMT family. Homodimer. Pyridoxal 5'-phosphate is required as a cofactor.

It is found in the cytoplasm. The enzyme catalyses (6R)-5,10-methylene-5,6,7,8-tetrahydrofolate + glycine + H2O = (6S)-5,6,7,8-tetrahydrofolate + L-serine. It participates in one-carbon metabolism; tetrahydrofolate interconversion. It functions in the pathway amino-acid biosynthesis; glycine biosynthesis; glycine from L-serine: step 1/1. Its function is as follows. Catalyzes the reversible interconversion of serine and glycine with tetrahydrofolate (THF) serving as the one-carbon carrier. This reaction serves as the major source of one-carbon groups required for the biosynthesis of purines, thymidylate, methionine, and other important biomolecules. Also exhibits THF-independent aldolase activity toward beta-hydroxyamino acids, producing glycine and aldehydes, via a retro-aldol mechanism. This is Serine hydroxymethyltransferase from Hyphomonas neptunium (strain ATCC 15444).